Reading from the N-terminus, the 91-residue chain is CLAVATA3/ESR (CLE)-related protein 27 (91 aa).

The signal sequence occupies residues 1-35 (MTHAREWRSSLTTTLLMVILLSYMLHLFCVYSRVG). Hydroxyproline occurs at positions 83 and 86. An O-linked (Ara...) hydroxyproline glycan is attached at proline 86.

Belongs to the CLV3/ESR signal peptide family. In terms of processing, the O-glycosylation (arabinosylation) of the hydroxyproline Pro-86 enhances binding affinity of the CLE27p peptide for its receptor. Mostly expressed in apex, and, to a lower extent, in roots, leaves, flowers and siliques.

The protein localises to the secreted. It localises to the extracellular space. In terms of biological role, extracellular signal peptide that regulates cell fate. Represses root apical meristem maintenance. In Arabidopsis thaliana (Mouse-ear cress), this protein is CLAVATA3/ESR (CLE)-related protein 27.